The primary structure comprises 569 residues: Apical membrane antigen 1 (569 aa).

The signal sequence occupies residues M1–A48. A propeptide spans S49–S66 (removed in mature form; required for microneme targeting of the proprotein). Residues S49–T483 lie on the Extracellular side of the membrane. The DI stretch occupies residues T67 to P287. The N-linked (GlcNAc...) asparagine glycan is linked to N86. Intrachain disulfides connect C117–C286, C194–C226, C242–C255, C304–C393, C324–C384, C435–C459, C447–C471, and C452–C479. Residues N288–N415 form a DII region. Residues F416–A487 are DIII. A helical membrane pass occupies residues A484–C504. Topologically, residues Y505–Y569 are cytoplasmic. Residues A518–G530 are compositionally biased toward basic and acidic residues. Positions A518–W548 are disordered.

Belongs to the apicomplexan parasites AMA1 family. Component of the moving junction (MJ) complex, composed of AMA1, a transmembrane protein on the parasite surface, and a complex of the rhoptry neck proteins RON2, RON4, RON5 and RON8 localized to the cytoplasmic face of the host plasma membrane. Interacts (via ectodomain) with RON2 (via C-terminus); RON2 serves as the receptor for AMA1 on the host plasma membrane. AMA1 and the RON proteins are initially in distinct compartments within the parasite, namely the micronemes and the rhoptries, and interaction happens only upon initiation of invasion when the micronemes and rhoptries discharge. Proteolytically cleaved during invasion within its transmembrane domain, releasing a soluble form from the tachyzoite surface. The cytosolic tail generated by ROM4 cleavage during invasion may trigger parasite replication within the parasitophorous vacuole.

Its subcellular location is the cell membrane. It localises to the secreted. Its function is as follows. Essential microneme protein that plays an important role in host cell invasion. Part of the moving junction (MJ) complex, a ringlike structure formed between the plasma membranes of the apical tip of the parasite and the target host cell. During invasion, the MJ migrates from the anterior to the posterior of the parasite, leading to internalization of the parasite into a parasitophorous vacuole (PV). The protein is Apical membrane antigen 1 (AMA1) of Toxoplasma gondii (strain ATCC 50861 / VEG).